A 448-amino-acid chain; its full sequence is Iroquois-class homeodomain protein irx-3 (448 aa).

Positions 108-170 (DPSRPKNATR…NARRRLKKEN (63 aa)) form a DNA-binding region, homeobox; TALE-type. Disordered stretches follow at residues 171–250 (KMTW…NAPE) and 387–410 (SGTASFPKAAEPKHSTDSLTDRSS). A compositionally biased stretch (acidic residues) spans 195 to 222 (KHEDDEEIDLENIDTEDIESKEDLDDPD). The segment covering 223–237 (TDIHSDSKTDARSDS) has biased composition (basic and acidic residues). Positions 238–248 (EASDGFEDLNA) are enriched in acidic residues. Residues 396–406 (AEPKHSTDSLT) show a composition bias toward basic and acidic residues.

This sequence belongs to the TALE/IRO homeobox family. In terms of tissue distribution, expressed in the neural plate in overlapping patterns with other irx members, which all share an anterior border of expression. Outside the nervous system and at tailbud stages, expressed in the developing otic vesicle, branchial arches, prospective heart region and pronephros.

Its subcellular location is the nucleus. Acts partially redundantly with other irx members in neural patterning. Required for formation of the posterior forebrain, midbrain, hindbrain, and to a lesser extent, spinal cord. Both up-regulates and down-regulates gene expression during neural development. Acts early in neural plate development to induce proneural gene expression and specify a neural precursor state. Also up-regulates repressors that prevent neuronal differentiation. Required during at least two stages of pronephros kidney development; during neurula stages, maintains transcription of key renal genes to define the size and identity of the pronephric anlage, probably in part through regulation of bmp-signaling. Subsequently required for proper formation of the intermediate tubule segment of the pronephros. This Xenopus tropicalis (Western clawed frog) protein is Iroquois-class homeodomain protein irx-3.